Here is a 222-residue protein sequence, read N- to C-terminus: Pyridoxine/pyridoxamine 5'-phosphate oxidase (222 aa).

FMN-binding positions include 71–76, 86–87, lysine 93, and glutamine 115; these read RMVLLK and YT. Lysine 76 is a binding site for substrate. Substrate is bound by residues tyrosine 133, arginine 137, and serine 141. Residues 150–151 and tryptophan 195 each bind FMN; that span reads QS. A substrate-binding site is contributed by 201-203; that stretch reads RLH. Residue arginine 205 participates in FMN binding.

This sequence belongs to the pyridoxamine 5'-phosphate oxidase family. Homodimer. It depends on FMN as a cofactor.

The catalysed reaction is pyridoxamine 5'-phosphate + O2 + H2O = pyridoxal 5'-phosphate + H2O2 + NH4(+). It carries out the reaction pyridoxine 5'-phosphate + O2 = pyridoxal 5'-phosphate + H2O2. It participates in cofactor metabolism; pyridoxal 5'-phosphate salvage; pyridoxal 5'-phosphate from pyridoxamine 5'-phosphate: step 1/1. The protein operates within cofactor metabolism; pyridoxal 5'-phosphate salvage; pyridoxal 5'-phosphate from pyridoxine 5'-phosphate: step 1/1. Its function is as follows. Catalyzes the oxidation of either pyridoxine 5'-phosphate (PNP) or pyridoxamine 5'-phosphate (PMP) into pyridoxal 5'-phosphate (PLP). This is Pyridoxine/pyridoxamine 5'-phosphate oxidase from Caulobacter vibrioides (strain ATCC 19089 / CIP 103742 / CB 15) (Caulobacter crescentus).